Consider the following 245-residue polypeptide: NAD(P)H-quinone oxidoreductase subunit K (245 aa).

C58, C59, C123, and C154 together coordinate [4Fe-4S] cluster.

The protein belongs to the complex I 20 kDa subunit family. In terms of assembly, NDH-1 can be composed of about 15 different subunits; different subcomplexes with different compositions have been identified which probably have different functions. The cofactor is [4Fe-4S] cluster.

Its subcellular location is the cellular thylakoid membrane. It catalyses the reaction a plastoquinone + NADH + (n+1) H(+)(in) = a plastoquinol + NAD(+) + n H(+)(out). The catalysed reaction is a plastoquinone + NADPH + (n+1) H(+)(in) = a plastoquinol + NADP(+) + n H(+)(out). NDH-1 shuttles electrons from an unknown electron donor, via FMN and iron-sulfur (Fe-S) centers, to quinones in the respiratory and/or the photosynthetic chain. The immediate electron acceptor for the enzyme in this species is believed to be plastoquinone. Couples the redox reaction to proton translocation, and thus conserves the redox energy in a proton gradient. Cyanobacterial NDH-1 also plays a role in inorganic carbon-concentration. The polypeptide is NAD(P)H-quinone oxidoreductase subunit K (Trichormus variabilis (strain ATCC 29413 / PCC 7937) (Anabaena variabilis)).